The following is a 198-amino-acid chain: Ribonuclease HII (198 aa).

The 190-residue stretch at Arg-6–Asn-195 folds into the RNase H type-2 domain. 3 residues coordinate a divalent metal cation: Asp-12, Glu-13, and Asp-103.

The protein belongs to the RNase HII family. Mn(2+) is required as a cofactor. Requires Mg(2+) as cofactor.

The protein localises to the cytoplasm. The catalysed reaction is Endonucleolytic cleavage to 5'-phosphomonoester.. Endonuclease that specifically degrades the RNA of RNA-DNA hybrids. The polypeptide is Ribonuclease HII (Roseobacter denitrificans (strain ATCC 33942 / OCh 114) (Erythrobacter sp. (strain OCh 114))).